Reading from the N-terminus, the 572-residue chain is Urease subunit alpha (572 aa).

The region spanning 134–572 (GGIDSHIHFI…LPMTQRYFLF (439 aa)) is the Urease domain. His-139, His-141, and Lys-222 together coordinate Ni(2+). Lys-222 bears the N6-carboxylysine mark. His-224 is a binding site for substrate. Residues His-251 and His-277 each contribute to the Ni(2+) site. The Proton donor role is filled by His-325. Asp-365 contributes to the Ni(2+) binding site.

This sequence belongs to the metallo-dependent hydrolases superfamily. Urease alpha subunit family. In terms of assembly, heterotrimer of UreA (gamma), UreB (beta) and UreC (alpha) subunits. Three heterotrimers associate to form the active enzyme. Requires Ni cation as cofactor. Post-translationally, carboxylation allows a single lysine to coordinate two nickel ions.

The protein localises to the cytoplasm. It carries out the reaction urea + 2 H2O + H(+) = hydrogencarbonate + 2 NH4(+). The protein operates within nitrogen metabolism; urea degradation; CO(2) and NH(3) from urea (urease route): step 1/1. This is Urease subunit alpha from Polaromonas sp. (strain JS666 / ATCC BAA-500).